Consider the following 257-residue polypeptide: 4-chloro-allylglycine synthase (257 aa).

Fe cation-binding residues include E112, H119, E173, H203, E207, and H210.

Requires Fe(2+) as cofactor.

The catalysed reaction is 4-chloro-L-lysine + AH2 + O2 = L-2-amino-4-chloropent-4-enoate + formaldehyde + A + NH4(+) + H2O. Its pathway is amino-acid metabolism. The protein operates within antibiotic biosynthesis. Involved in the biosynthesis of terminal alkyne-containing amino acids such as L-propargylglycine (Pra) and L-beta-ethynylserine, that are produced as antibiotics by S.cattleya. Catalyzes an oxidative C-C bond cleavage in 4-chloro-L-lysine to form 4-chloro-allyl-L-glycine (also named L-2-amino-4-chloropent-4-enoate), with release of formaldehyde and ammonia. Is also able to react with L-lysine directly to produce allylglycine in vitro. This chain is 4-chloro-allylglycine synthase, found in Streptantibioticus cattleyicolor (strain ATCC 35852 / DSM 46488 / JCM 4925 / NBRC 14057 / NRRL 8057) (Streptomyces cattleya).